Consider the following 236-residue polypeptide: Peptidase E (236 aa).

Residues Ser122, Asp137, and His159 each act as charge relay system in the active site.

It belongs to the peptidase S51 family.

It localises to the cytoplasm. The catalysed reaction is Dipeptidase E catalyzes the hydrolysis of dipeptides Asp-|-Xaa. It does not act on peptides with N-terminal Glu, Asn or Gln, nor does it cleave isoaspartyl peptides.. In terms of biological role, hydrolyzes dipeptides containing N-terminal aspartate residues. May play a role in allowing the cell to use peptide aspartate to spare carbon otherwise required for the synthesis of the aspartate family of amino acids. This is Peptidase E from Shewanella oneidensis (strain ATCC 700550 / JCM 31522 / CIP 106686 / LMG 19005 / NCIMB 14063 / MR-1).